The primary structure comprises 259 residues: LOB domain-containing protein CRL1 (259 aa).

One can recognise an LOB domain in the interval 6-108 (SPCGACKFLR…AQLASLKAAA (103 aa)).

It belongs to the LOB domain-containing protein family. In terms of assembly, can form homodimers. In terms of tissue distribution, expressed in unelongating basal internodes, at the base of shoot in parenchyma cells adjacent to the peripheral vascular cylinder of the stem, and root pericycle cells. Expressed in lateral and adventitious root primordia, tiller primordia, vascular tissues, scutellum, and young pedicels.

It is found in the nucleus. Functionally, acts as a positive regulator of adventitious (crown) root formation by promoting its initiation. Acts as a positive regulator of lateral root formation. Regulated by the auxin response factor and transcriptional activator ARF23/ARF1. Involved in auxin-mediated cell dedifferentiation, and may promote the initial cell division in the pericycle cells adjacent to the peripheral vascular cylinder at the base of the stem. May act upstream of the gene regulatory network controlling adventitious root (crown) development. The protein is LOB domain-containing protein CRL1 of Oryza sativa subsp. japonica (Rice).